Here is a 113-residue protein sequence, read N- to C-terminus: Cell wall protein PGA59 (113 aa).

An N-terminal signal peptide occupies residues 1 to 18; the sequence is MQFSSAIILSAVAGSALA. N-linked (GlcNAc...) asparagine glycans are attached at residues Asn22 and Asn80. A lipid anchor (GPI-anchor amidated glycine) is attached at Gly92. Positions 93–113 are cleaved as a propeptide — removed in mature form; it reads AAAANAVPAVAAGLLALGAFM.

This sequence belongs to the HWP1 family. In terms of processing, N- and O-glycosylated. The GPI-anchor is attached to the protein in the endoplasmic reticulum and serves to target the protein to the cell surface. There, the glucosamine-inositol phospholipid moiety is cleaved off and the GPI-modified mannoprotein is covalently attached via its lipidless GPI glycan remnant to the 1,6-beta-glucan of the outer cell wall layer.

The protein resides in the secreted. It localises to the cell wall. Its subcellular location is the membrane. Cell wall protein necessary for cell wall integrity. Plays only a minor role in hyphal morphogenesis and is not critical to biofilm formation. This is Cell wall protein PGA59 (PGA59) from Candida albicans (strain SC5314 / ATCC MYA-2876) (Yeast).